The chain runs to 942 residues: Homeobox transcription factor phx1 (942 aa).

Polar residues-rich tracts occupy residues 1 to 19, 61 to 73, 99 to 116, and 122 to 135; these read MRSY…NINY, HLQG…TNPN, ADNN…TNPS, and IVKS…SKQN. 5 disordered regions span residues 1–54, 61–80, 87–172, 604–651, and 892–922; these read MRSY…MQLP, HLQG…PEFD, KQEK…KKQR, WANQ…STST, and SSSG…DVYS. Over residues 142–151 the composition is skewed to basic and acidic residues; sequence SVEKAKENVA. A compositionally biased stretch (low complexity) spans 153-164; that stretch reads ESGTPESGGSTS. The homeobox DNA-binding region spans 164-224; the sequence is SAPKSKKQRL…QNRRAKSKLI (61 aa). 2 stretches are compositionally biased toward polar residues: residues 604–614 and 630–641; these read WANQLPRQPDS and SHDTSSEYGNKS.

Its subcellular location is the nucleus. In terms of biological role, trnascription factor that regulates the expression of the homocitrate synthase (HCS) lys4. This chain is Homeobox transcription factor phx1 (phx1), found in Schizosaccharomyces pombe (strain 972 / ATCC 24843) (Fission yeast).